A 375-amino-acid chain; its full sequence is N5-carboxyaminoimidazole ribonucleotide synthase (375 aa).

ATP is bound by residues Arg-108, Lys-148, 153-159 (GYDGKGQ), 183-186 (EQYL), Glu-191, His-214, and 266-267 (NE). The region spanning 112–296 (KQTLLEANTQ…QFDTHILAIT (185 aa)) is the ATP-grasp domain.

The protein belongs to the PurK/PurT family. Homodimer.

It carries out the reaction 5-amino-1-(5-phospho-beta-D-ribosyl)imidazole + hydrogencarbonate + ATP = 5-carboxyamino-1-(5-phospho-D-ribosyl)imidazole + ADP + phosphate + 2 H(+). It functions in the pathway purine metabolism; IMP biosynthesis via de novo pathway; 5-amino-1-(5-phospho-D-ribosyl)imidazole-4-carboxylate from 5-amino-1-(5-phospho-D-ribosyl)imidazole (N5-CAIR route): step 1/2. Catalyzes the ATP-dependent conversion of 5-aminoimidazole ribonucleotide (AIR) and HCO(3)(-) to N5-carboxyaminoimidazole ribonucleotide (N5-CAIR). The polypeptide is N5-carboxyaminoimidazole ribonucleotide synthase (Staphylococcus epidermidis (strain ATCC 35984 / DSM 28319 / BCRC 17069 / CCUG 31568 / BM 3577 / RP62A)).